The following is a 95-amino-acid chain: NADH-quinone oxidoreductase subunit 11 (95 aa).

3 consecutive transmembrane segments (helical) span residues 1-21 (MSYL…VLTR), 25-45 (ILVF…LVGF), and 59-79 (MVIA…VAIF).

This sequence belongs to the complex I subunit 4L family. NDH-1 is composed of 15 different subunits, Nqo1 to Nqo15. The complex has a L-shaped structure, with the hydrophobic arm (subunits Nqo7, Nqo8 and Nqo10 to Nqo14) embedded in the membrane and the hydrophilic peripheral arm (subunits Nqo1 to Nqo6, Nqo9 and Nqo15) protruding into the bacterial cytoplasm. The hydrophilic domain contains all the redox centers.

The protein resides in the cell inner membrane. The enzyme catalyses a quinone + NADH + 5 H(+)(in) = a quinol + NAD(+) + 4 H(+)(out). Functionally, NDH-1 shuttles electrons from NADH, via FMN and iron-sulfur (Fe-S) centers, to quinones in the respiratory chain. The immediate electron acceptor for the enzyme in this species is menaquinone. Couples the redox reaction to proton translocation (for every two electrons transferred, four hydrogen ions are translocated across the cytoplasmic membrane), and thus conserves the redox energy in a proton gradient required for the synthesis of ATP. The protein is NADH-quinone oxidoreductase subunit 11 (nqo11) of Thermus thermophilus (strain ATCC 27634 / DSM 579 / HB8).